We begin with the raw amino-acid sequence, 423 residues long: Glucose-1-phosphate adenylyltransferase 1 (423 aa).

Residues Tyr-111, Gly-176, 191–192 (EK), and Ser-209 each bind alpha-D-glucose 1-phosphate.

The protein belongs to the bacterial/plant glucose-1-phosphate adenylyltransferase family. Homotetramer.

The enzyme catalyses alpha-D-glucose 1-phosphate + ATP + H(+) = ADP-alpha-D-glucose + diphosphate. It functions in the pathway glycan biosynthesis; glycogen biosynthesis. Functionally, involved in the biosynthesis of ADP-glucose, a building block required for the elongation reactions to produce glycogen. Catalyzes the reaction between ATP and alpha-D-glucose 1-phosphate (G1P) to produce pyrophosphate and ADP-Glc. This is Glucose-1-phosphate adenylyltransferase 1 from Alkalilimnicola ehrlichii (strain ATCC BAA-1101 / DSM 17681 / MLHE-1).